Consider the following 364-residue polypeptide: Alanine racemase (364 aa).

The active-site Proton acceptor; specific for D-alanine is Lys-34. Residue Lys-34 is modified to N6-(pyridoxal phosphate)lysine. Position 129 (Arg-129) interacts with substrate. Catalysis depends on Tyr-259, which acts as the Proton acceptor; specific for L-alanine. Met-307 contributes to the substrate binding site.

Belongs to the alanine racemase family. Pyridoxal 5'-phosphate is required as a cofactor.

It catalyses the reaction L-alanine = D-alanine. It functions in the pathway amino-acid biosynthesis; D-alanine biosynthesis; D-alanine from L-alanine: step 1/1. In terms of biological role, catalyzes the interconversion of L-alanine and D-alanine. May also act on other amino acids. This chain is Alanine racemase (alr), found in Coxiella burnetii (strain CbuG_Q212) (Coxiella burnetii (strain Q212)).